We begin with the raw amino-acid sequence, 79 residues long: Small ribosomal subunit protein bS16c (79 aa).

It belongs to the bacterial ribosomal protein bS16 family.

The protein localises to the plastid. It is found in the chloroplast. In Staurastrum punctulatum (Green alga), this protein is Small ribosomal subunit protein bS16c.